Here is an 895-residue protein sequence, read N- to C-terminus: Zinc finger protein 281 (895 aa).

2 disordered regions span residues 1–44 (MKIG…EMEP) and 63–113 (FTRP…AFPS). Residue Lys-2 forms a Glycyl lysine isopeptide (Lys-Gly) (interchain with G-Cter in SUMO2) linkage. The span at 7 to 36 (FLSGGGGTGSSGGSGSGGGGSGGGGGGGSS) shows a compositional bias: gly residues. Glycyl lysine isopeptide (Lys-Gly) (interchain with G-Cter in SUMO2) cross-links involve residues Arg-65, Lys-101, and Lys-128. Composition is skewed to basic and acidic residues over residues 130 to 140 (EKPADPEEQQS) and 202 to 218 (RTDD…DTNV). Disordered regions lie at residues 130–149 (EKPA…HHHY) and 183–253 (HVQQ…EGAI). Glycyl lysine isopeptide (Lys-Gly) (interchain with G-Cter in SUMO2) cross-links involve residues Lys-213, Lys-219, Lys-225, Lys-232, Lys-242, and Lys-259. C2H2-type zinc fingers lie at residues 261 to 283 (HICD…VLIH), 289 to 311 (FQCS…EKIH), and 317 to 339 (FGCD…KRTH). Residues Lys-301 and Lys-325 each participate in a glycyl lysine isopeptide (Lys-Gly) (interchain with G-Cter in SUMO2) cross-link. A C2H2-type 4; atypical zinc finger spans residues 345–367 (YKCDTCQQYFSRTDRLLKHRRTC). Lys-373 participates in a covalent cross-link: Glycyl lysine isopeptide (Lys-Gly) (interchain with G-Cter in SUMO2). Residues 377 to 427 (SAEPGSSNHTNMGNLAVLSQGNTSSSRRKTKSKSIAIENKEQKTGKTNESQ) are disordered. Over residues 379 to 398 (EPGSSNHTNMGNLAVLSQGN) the composition is skewed to polar residues. Ser-395 is modified (phosphoserine). Residues Lys-409, Lys-416, Lys-460, and Lys-477 each participate in a glycyl lysine isopeptide (Lys-Gly) (interchain with G-Cter in SUMO2) cross-link. Ser-484 carries the phosphoserine modification. Residues Lys-493, Lys-498, Lys-539, Lys-599, Lys-617, and Lys-622 each participate in a glycyl lysine isopeptide (Lys-Gly) (interchain with G-Cter in SUMO2) cross-link. Positions 638 to 660 (SGEHSELVQEENLSPGTQTPSND) are disordered. Positions 648–660 (ENLSPGTQTPSND) are enriched in polar residues. Residue Ser-651 is modified to Phosphoserine. Residues Lys-661 and Lys-670 each participate in a glycyl lysine isopeptide (Lys-Gly) (interchain with G-Cter in SUMO2) cross-link. The segment covering 778–789 (SSAFQSSSQKLT) has biased composition (polar residues). The interval 778 to 817 (SSAFQSSSQKLTSQKEQKNLESSTGFQIPSQELASQIDPQ) is disordered. Ser-785 carries the post-translational modification Phosphoserine. Residues Lys-787, Lys-792, and Lys-795 each participate in a glycyl lysine isopeptide (Lys-Gly) (interchain with G-Cter in SUMO2) cross-link. Residues 797–815 (LESSTGFQIPSQELASQID) are compositionally biased toward polar residues. A Phosphoserine modification is found at Ser-807. Residues Lys-818 and Lys-840 each participate in a glycyl lysine isopeptide (Lys-Gly) (interchain with G-Cter in SUMO2) cross-link. Thr-888 is modified (phosphothreonine).

This sequence belongs to the krueppel C2H2-type zinc-finger protein family.

The protein resides in the nucleus. Transcription repressor that plays a role in regulation of embryonic stem cells (ESCs) differentiation. Required for ESCs differentiation and acts by mediating autorepression of NANOG in ESCs: binds to the NANOG promoter and promotes association of NANOG protein to its own promoter and recruits the NuRD complex, which deacetylates histones. Not required for establishement and maintenance of ESCs. Represses the transcription of a number of genes including GAST, ODC1 and VIM. Binds to the G-rich box in the enhancer region of these genes. The sequence is that of Zinc finger protein 281 (ZNF281) from Homo sapiens (Human).